The chain runs to 38 residues: Photosystem II reaction center protein L (38 aa).

A helical transmembrane segment spans residues 17–37; the sequence is SLYWGLLLIFVLAVLFSNYFF.

The protein belongs to the PsbL family. As to quaternary structure, PSII is composed of 1 copy each of membrane proteins PsbA, PsbB, PsbC, PsbD, PsbE, PsbF, PsbH, PsbI, PsbJ, PsbK, PsbL, PsbM, PsbT, PsbX, PsbY, PsbZ, Psb30/Ycf12, at least 3 peripheral proteins of the oxygen-evolving complex and a large number of cofactors. It forms dimeric complexes.

Its subcellular location is the plastid. It localises to the chloroplast thylakoid membrane. One of the components of the core complex of photosystem II (PSII). PSII is a light-driven water:plastoquinone oxidoreductase that uses light energy to abstract electrons from H(2)O, generating O(2) and a proton gradient subsequently used for ATP formation. It consists of a core antenna complex that captures photons, and an electron transfer chain that converts photonic excitation into a charge separation. This subunit is found at the monomer-monomer interface and is required for correct PSII assembly and/or dimerization. The polypeptide is Photosystem II reaction center protein L (Oenothera argillicola (Appalachian evening primrose)).